A 416-amino-acid chain; its full sequence is Formyl-CoA:oxalate CoA-transferase (416 aa).

Residues Q17–S18, R38, L72–K75, N96–H98, H104, and K137–E140 each bind CoA. The Nucleophile role is filled by D169. G248–Q250 is a binding site for substrate. Q273–Q275 is a binding site for CoA.

This sequence belongs to the CoA-transferase III family. Frc subfamily. Homodimer.

The enzyme catalyses formyl-CoA + oxalate = oxalyl-CoA + formate. Its pathway is metabolic intermediate degradation; oxalate degradation; CO(2) and formate from oxalate: step 1/2. Involved in the catabolism of oxalate and in the adapatation to low pH via the induction of the oxalate-dependent acid tolerance response (ATR). Catalyzes the transfer of the CoA moiety from formyl-CoA to oxalate. This chain is Formyl-CoA:oxalate CoA-transferase, found in Shigella sonnei (strain Ss046).